The sequence spans 418 residues: Queuine tRNA-ribosyltransferase accessory subunit 2 (418 aa).

C325, C327, C330, and H356 together coordinate Zn(2+).

This sequence belongs to the queuine tRNA-ribosyltransferase family. QTRT2 subfamily. In terms of assembly, heterodimer of a catalytic subunit and an accessory subunit. It depends on Zn(2+) as a cofactor.

Its subcellular location is the cytoplasm. Its function is as follows. Non-catalytic subunit of the queuine tRNA-ribosyltransferase (TGT) that catalyzes the base-exchange of a guanine (G) residue with queuine (Q) at position 34 (anticodon wobble position) in tRNAs with GU(N) anticodons (tRNA-Asp, -Asn, -His and -Tyr), resulting in the hypermodified nucleoside queuosine (7-(((4,5-cis-dihydroxy-2-cyclopenten-1-yl)amino)methyl)-7-deazaguanosine). This is Queuine tRNA-ribosyltransferase accessory subunit 2 from Drosophila melanogaster (Fruit fly).